The primary structure comprises 432 residues: MGVSLKKLEKSVATIELTIPSEKFEEGLNFAFKKNASKFNVPGFRRGKAPRVIVERYYGEGVLYEDAVEYVFDEAYKEALKTFNLEPVDYPDINILQIGKGKDLILEATVPVMPEVELGEYKGIEIEKIEYNVYDGDVEYELEKLRQQNARIVPVEGRPAESGDIAVIDFEGFIDGKPFEGGKAENYELELGSNTFIPGFEDQIIGHNVNETFDVNITFPEDYRVEELRGKSAVFKVTLKALNKKELPELDDEFAKDVSEFETLDELKADIRKKLEEKNRVEAENEMKEKAVMKVVENAKVDIPDVMVERQIDISLRDLDYNLRYQGLDLNSYLSITGKTLENLRKEMWDGALNRVKTQLVIDKIAKVENIEVTEEELENKLKEMAANYRINLEEFKKSLTESQINSIKEDIAYYKTIDFIFSKCKIISKEE.

Positions 163 to 248 (GDIAVIDFEG…LKALNKKELP (86 aa)) constitute a PPIase FKBP-type domain.

Belongs to the FKBP-type PPIase family. Tig subfamily.

Its subcellular location is the cytoplasm. It carries out the reaction [protein]-peptidylproline (omega=180) = [protein]-peptidylproline (omega=0). Its function is as follows. Involved in protein export. Acts as a chaperone by maintaining the newly synthesized protein in an open conformation. Functions as a peptidyl-prolyl cis-trans isomerase. The chain is Trigger factor from Thermoanaerobacter pseudethanolicus (strain ATCC 33223 / 39E) (Clostridium thermohydrosulfuricum).